We begin with the raw amino-acid sequence, 468 residues long: Phosphomethylpyrimidine synthase (468 aa).

Substrate is bound by residues asparagine 80, methionine 109, tyrosine 138, histidine 173, 193 to 195 (SRG), 234 to 237 (DGLR), and glutamate 273. Histidine 277 is a binding site for Zn(2+). A substrate-binding site is contributed by tyrosine 300. Position 341 (histidine 341) interacts with Zn(2+). 3 residues coordinate [4Fe-4S] cluster: cysteine 421, cysteine 424, and cysteine 429.

Belongs to the ThiC family. As to quaternary structure, homodimer. The cofactor is [4Fe-4S] cluster.

It carries out the reaction 5-amino-1-(5-phospho-beta-D-ribosyl)imidazole + S-adenosyl-L-methionine = 4-amino-2-methyl-5-(phosphooxymethyl)pyrimidine + CO + 5'-deoxyadenosine + formate + L-methionine + 3 H(+). It participates in cofactor biosynthesis; thiamine diphosphate biosynthesis. In terms of biological role, catalyzes the synthesis of the hydroxymethylpyrimidine phosphate (HMP-P) moiety of thiamine from aminoimidazole ribotide (AIR) in a radical S-adenosyl-L-methionine (SAM)-dependent reaction. The sequence is that of Phosphomethylpyrimidine synthase from Anaeromyxobacter sp. (strain Fw109-5).